Consider the following 93-residue polypeptide: Putative pterin-4-alpha-carbinolamine dehydratase (93 aa).

It belongs to the pterin-4-alpha-carbinolamine dehydratase family.

It catalyses the reaction (4aS,6R)-4a-hydroxy-L-erythro-5,6,7,8-tetrahydrobiopterin = (6R)-L-erythro-6,7-dihydrobiopterin + H2O. This is Putative pterin-4-alpha-carbinolamine dehydratase from Roseiflexus sp. (strain RS-1).